A 156-amino-acid polypeptide reads, in one-letter code: Small ribosomal subunit protein uS7 (156 aa).

It belongs to the universal ribosomal protein uS7 family. Part of the 30S ribosomal subunit. Contacts proteins S9 and S11.

In terms of biological role, one of the primary rRNA binding proteins, it binds directly to 16S rRNA where it nucleates assembly of the head domain of the 30S subunit. Is located at the subunit interface close to the decoding center, probably blocks exit of the E-site tRNA. The chain is Small ribosomal subunit protein uS7 from Streptococcus thermophilus (strain CNRZ 1066).